The primary structure comprises 132 residues: D-ribose pyranase (132 aa).

Catalysis depends on His-20, which acts as the Proton donor. Residues Asp-28, His-99, and Tyr-121–Asn-123 contribute to the substrate site.

Belongs to the RbsD / FucU family. RbsD subfamily. Homodecamer.

Its subcellular location is the cytoplasm. It catalyses the reaction beta-D-ribopyranose = beta-D-ribofuranose. It participates in carbohydrate metabolism; D-ribose degradation; D-ribose 5-phosphate from beta-D-ribopyranose: step 1/2. Catalyzes the interconversion of beta-pyran and beta-furan forms of D-ribose. This is D-ribose pyranase from Lactococcus lactis subsp. cremoris (strain MG1363).